The following is a 353-amino-acid chain: Photosystem II D2 protein (353 aa).

Position 2 is an N-acetylthreonine (Thr2). At Thr2 the chain carries Phosphothreonine. A helical membrane pass occupies residues 41-61 (CAYFAVGGWFTGTTFVTSWYT). A chlorophyll a-binding site is contributed by His118. A helical transmembrane segment spans residues 125–141 (GFMLRQFELARSVQLRP). Pheophytin a is bound by residues Gln130 and Asn143. The helical transmembrane segment at 153-166 (VFVSVFLIYPLGQS) threads the bilayer. Residue His198 coordinates chlorophyll a. Residues 208-228 (AALLCAIHGATVENTLFEDGD) form a helical membrane-spanning segment. A plastoquinone-binding residues include His215 and Phe262. His215 is a binding site for Fe cation. Position 269 (His269) interacts with Fe cation. A helical membrane pass occupies residues 279–295 (GLWMSALGVVGLALNLR).

Belongs to the reaction center PufL/M/PsbA/D family. In terms of assembly, PSII is composed of 1 copy each of membrane proteins PsbA, PsbB, PsbC, PsbD, PsbE, PsbF, PsbH, PsbI, PsbJ, PsbK, PsbL, PsbM, PsbT, PsbX, PsbY, PsbZ, Psb30/Ycf12, at least 3 peripheral proteins of the oxygen-evolving complex and a large number of cofactors. It forms dimeric complexes. Requires The D1/D2 heterodimer binds P680, chlorophylls that are the primary electron donor of PSII, and subsequent electron acceptors. It shares a non-heme iron and each subunit binds pheophytin, quinone, additional chlorophylls, carotenoids and lipids. There is also a Cl(-1) ion associated with D1 and D2, which is required for oxygen evolution. The PSII complex binds additional chlorophylls, carotenoids and specific lipids. as cofactor.

The protein resides in the plastid. It localises to the chloroplast thylakoid membrane. It catalyses the reaction 2 a plastoquinone + 4 hnu + 2 H2O = 2 a plastoquinol + O2. In terms of biological role, photosystem II (PSII) is a light-driven water:plastoquinone oxidoreductase that uses light energy to abstract electrons from H(2)O, generating O(2) and a proton gradient subsequently used for ATP formation. It consists of a core antenna complex that captures photons, and an electron transfer chain that converts photonic excitation into a charge separation. The D1/D2 (PsbA/PsbD) reaction center heterodimer binds P680, the primary electron donor of PSII as well as several subsequent electron acceptors. D2 is needed for assembly of a stable PSII complex. This Lactuca sativa (Garden lettuce) protein is Photosystem II D2 protein.